The chain runs to 151 residues: Probable transport accessory protein MmpS1 (151 aa).

2 helical membrane passes run 8-28 and 81-101; these read FWIP…VSRL and VVNA…AVVA.

It belongs to the MmpS family.

The protein localises to the cell membrane. The protein is Probable transport accessory protein MmpS1 (mmpS1) of Mycobacterium tuberculosis (strain CDC 1551 / Oshkosh).